Here is a 503-residue protein sequence, read N- to C-terminus: Glucosaminyl-phosphatidylinositol-acyltransferase PIGW (503 aa).

The Lumenal segment spans residues 1-21 (MSQKQLKEAFVRNLSGTSVLE). Asn-13 is a glycosylation site (N-linked (GlcNAc...) asparagine). A helical membrane pass occupies residues 22–42 (VTQGLCFPAFCILCRGLWIIF). Over 43–48 (SQHVCS) the chain is Cytoplasmic. Residues 49–71 (FSNTWSTRFLMDFVVLIVPLVIT) form a helical membrane-spanning segment. The Lumenal portion of the chain corresponds to 72-74 (LTV). Residues 75–97 (LSSFILLENLTVIVWGAWLLYQI) traverse the membrane as a helical segment. Residues 98–131 (YHRRTCYAKVPVQKVFANFLKISLESEYNPAITC) are Cytoplasmic-facing. Residues 132–152 (YRVINSVFTAIAILAVDFPLF) form a helical membrane-spanning segment. The Lumenal portion of the chain corresponds to 153–160 (PRRFAKTE). A helical membrane pass occupies residues 161-181 (LYGTGAMDFGVGGFIFGAAMV). At 182-201 (CPEVRRKSIEESRFNYLRKS) the chain is on the cytoplasmic side. A helical membrane pass occupies residues 202-222 (LYSVWPLVFLGMGRLVIIKSI). The Lumenal segment spans residues 223–236 (GYQEHSTEYGIHWN). Residues 237–257 (FFFTIIVVRLVTSLLLIIFPL) traverse the membrane as a helical segment. The Cytoplasmic portion of the chain corresponds to 258–259 (NK). A helical transmembrane segment spans residues 260 to 280 (SWIVAVSITVVYQLALDYTPL). The Lumenal segment spans residues 281-304 (KRILLYGTDGSGTRVGFLNANREG). Residues 305-325 (IISTLGYVTIHMAGVQTGLYV) form a helical membrane-spanning segment. Residues 326–339 (LKGRAQVRDWIKAT) lie on the Cytoplasmic side of the membrane. A helical membrane pass occupies residues 340 to 360 (CWVFSVAVGFFISLHIVQVNI). The Lumenal segment spans residues 361–380 (EAVSRRMANLAFCLWVVASS). Residues 381–401 (LMLLSCLLLSGIILSFAQFLI) traverse the membrane as a helical segment. Residues 402-447 (KGSLVPCSWKLIQSPTTHKNHSESLILEAEKNQPSLCLITALNRNQ) lie on the Cytoplasmic side of the membrane. The residue at position 415 (Ser-415) is a Phosphoserine. Residues 448 to 468 (LFFFLLSNITTGLINLTMDTL) traverse the membrane as a helical segment. At 469–472 (HTGA) the chain is on the lumenal side. The chain crosses the membrane as a helical span at residues 473–493 (LWTLVVLSIYMFTNCLVIYVL). Residues 494–503 (DLQGKTIKFW) are Cytoplasmic-facing.

This sequence belongs to the PIGW family.

The protein localises to the endoplasmic reticulum membrane. It participates in glycolipid biosynthesis; glycosylphosphatidylinositol-anchor biosynthesis. Acyltransferase that catalyzes the acyl transfer from an acyl-CoA at the 2-OH position of the inositol ring of glucosaminyl phosphatidylinositol (GlcN-PI) to generate GlcN-(acyl)PI and participates in the fourth step of GPI-anchor biosynthesi. Required for the transport of GPI-anchored proteins to the plasma membrane. Acetylation during GPI-anchor biosynthesis is not essential for the subsequent mannosylation and is usually removed soon after the attachment of GPIs to proteins. The protein is Glucosaminyl-phosphatidylinositol-acyltransferase PIGW of Mus musculus (Mouse).